The chain runs to 127 residues: MLSVGNDIVENERIRELLQKHGDRFLKRVFTDDEVEYCHKHKDPVPFLAGRFACKEAVIKALNLEPGQVADMREIELAGTNFGKKTLVIHGKTEKFFREKGFTGSSVSISHADHYSTAVVVFFKEPK.

Aspartate 7 and glutamate 56 together coordinate Mg(2+).

This sequence belongs to the P-Pant transferase superfamily. AcpS family. Mg(2+) is required as a cofactor.

It localises to the cytoplasm. The enzyme catalyses apo-[ACP] + CoA = holo-[ACP] + adenosine 3',5'-bisphosphate + H(+). Its function is as follows. Transfers the 4'-phosphopantetheine moiety from coenzyme A to a Ser of acyl-carrier-protein. In Leptospira biflexa serovar Patoc (strain Patoc 1 / Ames), this protein is Holo-[acyl-carrier-protein] synthase.